The primary structure comprises 249 residues: MNKAIYESMNAAIKLLDKQAVIANNLANISTVGFKESFNLFIKDRNLQNLKKTYNQNVKEYYNFYPGTLIHTQRNLDLVIKNNGWLAIKDINGQEAYTKNGHIKINKEGKMTVQNYELIGNNGNIKIPNNVNLKISSNGIIKEIKKNKDSIIESTIGSLKLVRLQNDNLIQKENGLFYLKKDNLNKYKNILHDSSVRIQSEMLEASNVNPTKNMIDMISNARQFEMNMKIISMCDQNTEYANQLFNVNN.

It belongs to the flagella basal body rod proteins family. As to quaternary structure, the basal body constitutes a major portion of the flagellar organelle and consists of five rings (E,L,P,S, and M) mounted on a central rod. The rod consists of about 26 subunits of FlgG in the distal portion, and FlgB, FlgC and FlgF are thought to build up the proximal portion of the rod with about 6 subunits each.

The protein localises to the bacterial flagellum basal body. The sequence is that of Flagellar basal-body rod protein FlgF (flgF) from Buchnera aphidicola subsp. Schizaphis graminum (strain Sg).